The chain runs to 455 residues: Bifunctional protein GlmU (455 aa).

Positions 1–227 (MKLKAIILAA…YEEIMAVNSR (227 aa)) are pyrophosphorylase. UDP-N-acetyl-alpha-D-glucosamine-binding positions include 8–11 (LAAG), lysine 22, glutamine 72, and 77–78 (GT). Residue aspartate 100 coordinates Mg(2+). Residues glycine 137, glutamate 152, asparagine 167, and asparagine 225 each contribute to the UDP-N-acetyl-alpha-D-glucosamine site. Asparagine 225 provides a ligand contact to Mg(2+). The linker stretch occupies residues 228–248 (EQLADVEAIMRRRIAKKHMAN). The N-acetyltransferase stretch occupies residues 249 to 455 (GVTIMNPEHV…WTKRKGLLKK (207 aa)). UDP-N-acetyl-alpha-D-glucosamine-binding residues include arginine 330 and lysine 348. Histidine 360 functions as the Proton acceptor in the catalytic mechanism. UDP-N-acetyl-alpha-D-glucosamine-binding residues include tyrosine 363 and asparagine 374. Acetyl-CoA is bound by residues 383-384 (NY), serine 402, cysteine 420, and arginine 437.

It in the N-terminal section; belongs to the N-acetylglucosamine-1-phosphate uridyltransferase family. The protein in the C-terminal section; belongs to the transferase hexapeptide repeat family. In terms of assembly, homotrimer. The cofactor is Mg(2+).

The protein localises to the cytoplasm. It catalyses the reaction alpha-D-glucosamine 1-phosphate + acetyl-CoA = N-acetyl-alpha-D-glucosamine 1-phosphate + CoA + H(+). It carries out the reaction N-acetyl-alpha-D-glucosamine 1-phosphate + UTP + H(+) = UDP-N-acetyl-alpha-D-glucosamine + diphosphate. It participates in nucleotide-sugar biosynthesis; UDP-N-acetyl-alpha-D-glucosamine biosynthesis; N-acetyl-alpha-D-glucosamine 1-phosphate from alpha-D-glucosamine 6-phosphate (route II): step 2/2. It functions in the pathway nucleotide-sugar biosynthesis; UDP-N-acetyl-alpha-D-glucosamine biosynthesis; UDP-N-acetyl-alpha-D-glucosamine from N-acetyl-alpha-D-glucosamine 1-phosphate: step 1/1. The protein operates within bacterial outer membrane biogenesis; LPS lipid A biosynthesis. Its function is as follows. Catalyzes the last two sequential reactions in the de novo biosynthetic pathway for UDP-N-acetylglucosamine (UDP-GlcNAc). The C-terminal domain catalyzes the transfer of acetyl group from acetyl coenzyme A to glucosamine-1-phosphate (GlcN-1-P) to produce N-acetylglucosamine-1-phosphate (GlcNAc-1-P), which is converted into UDP-GlcNAc by the transfer of uridine 5-monophosphate (from uridine 5-triphosphate), a reaction catalyzed by the N-terminal domain. The polypeptide is Bifunctional protein GlmU (Alkaliphilus oremlandii (strain OhILAs) (Clostridium oremlandii (strain OhILAs))).